Here is a 490-residue protein sequence, read N- to C-terminus: Ribulose bisphosphate carboxylase large chain (490 aa).

Substrate-binding residues include asparagine 127 and threonine 177. Lysine 179 serves as the catalytic Proton acceptor. Lysine 181 serves as a coordination point for substrate. Mg(2+) contacts are provided by lysine 205, aspartate 207, and glutamate 208. N6-carboxylysine is present on lysine 205. The active-site Proton acceptor is histidine 297. Substrate-binding residues include arginine 298, histidine 330, and serine 382.

It belongs to the RuBisCO large chain family. Type I subfamily. Heterohexadecamer of 8 large chains and 8 small chains. The cofactor is Mg(2+).

The protein resides in the plastid. It localises to the chloroplast. The catalysed reaction is 2 (2R)-3-phosphoglycerate + 2 H(+) = D-ribulose 1,5-bisphosphate + CO2 + H2O. It carries out the reaction D-ribulose 1,5-bisphosphate + O2 = 2-phosphoglycolate + (2R)-3-phosphoglycerate + 2 H(+). Functionally, ruBisCO catalyzes two reactions: the carboxylation of D-ribulose 1,5-bisphosphate, the primary event in carbon dioxide fixation, as well as the oxidative fragmentation of the pentose substrate in the photorespiration process. Both reactions occur simultaneously and in competition at the same active site. The chain is Ribulose bisphosphate carboxylase large chain from Detonula confervacea (Marine diatom).